The chain runs to 569 residues: Spermatogenesis-associated protein 16 (569 aa).

The span at Lys67 to Pro92 shows a compositional bias: basic and acidic residues. The segment at Lys67–Lys96 is disordered.

It belongs to the SPATA16 family. As to expression, expressed in testis.

It is found in the golgi apparatus. The protein localises to the cytoplasmic vesicle. Its subcellular location is the secretory vesicle. It localises to the acrosome. Functionally, essential for spermiogenesis and male fertility. Involved in the formation of sperm acrosome during spermatogenesis. The chain is Spermatogenesis-associated protein 16 (SPATA16) from Homo sapiens (Human).